The sequence spans 450 residues: Phosphoglucosamine mutase (450 aa).

Serine 101 (phosphoserine intermediate) is an active-site residue. Mg(2+)-binding residues include serine 101, aspartate 240, aspartate 242, and aspartate 244. Serine 101 carries the post-translational modification Phosphoserine.

Belongs to the phosphohexose mutase family. It depends on Mg(2+) as a cofactor. In terms of processing, activated by phosphorylation.

It catalyses the reaction alpha-D-glucosamine 1-phosphate = D-glucosamine 6-phosphate. In terms of biological role, catalyzes the conversion of glucosamine-6-phosphate to glucosamine-1-phosphate. This Streptococcus agalactiae serotype Ia (strain ATCC 27591 / A909 / CDC SS700) protein is Phosphoglucosamine mutase.